Here is a 523-residue protein sequence, read N- to C-terminus: F-box only protein 31-B (523 aa).

Residues 59-105 (PRSLLQLPPEILVEIFSSLPGTELPSLAQVCRKFRQILTTDTIWKRR) form the F-box domain. 4 residues coordinate Zn(2+): cysteine 201, histidine 209, cysteine 225, and histidine 231. Residues 372–427 (IQREQRQTGNEEDDGKGAGPDRAEHSQQPAPVHRPAKEDVNGVDNADDREQKPPNV) are disordered. Basic and acidic residues-rich tracts occupy residues 386-396 (GKGAGPDRAEH) and 406-423 (PAKE…REQK).

The protein belongs to the FBXO31 family. Part of a SCF (SKP1-cullin-F-box) protein ligase complex SCF(FBXO31).

Its subcellular location is the cytoplasm. It functions in the pathway protein modification; protein ubiquitination. Its function is as follows. Substrate-recognition component of the SCF(FBXO31) protein ligase complex, which specifically mediates the ubiquitination of proteins amidated at their C-terminus in response to oxidative stress, leading to their degradation by the proteasome. Fbxo31 specifically recognizes and binds C-terminal peptides bearing an amide: C-terminal amidation in response to oxidative stress takes place following protein fragmentation. The SCF(FBXO31) also plays a role in G1 arrest following DNA damage by mediating ubiquitination of phosphorylated cyclin-D1 (ccnd1), promoting its degradation by the proteasome, resulting in G1 arrest. The SCF(FBXO31) complex is however not a major regulator of ccnd1 stability during the G1/S transition. The sequence is that of F-box only protein 31-B (fbxo31-b) from Xenopus laevis (African clawed frog).